The chain runs to 494 residues: Glutamyl-tRNA(Gln) amidotransferase subunit A (494 aa).

Residues Lys72 and Ser147 each act as charge relay system in the active site. Catalysis depends on Ser171, which acts as the Acyl-ester intermediate.

Belongs to the amidase family. GatA subfamily. Heterotrimer of A, B and C subunits.

The enzyme catalyses L-glutamyl-tRNA(Gln) + L-glutamine + ATP + H2O = L-glutaminyl-tRNA(Gln) + L-glutamate + ADP + phosphate + H(+). Allows the formation of correctly charged Gln-tRNA(Gln) through the transamidation of misacylated Glu-tRNA(Gln) in organisms which lack glutaminyl-tRNA synthetase. The reaction takes place in the presence of glutamine and ATP through an activated gamma-phospho-Glu-tRNA(Gln). This is Glutamyl-tRNA(Gln) amidotransferase subunit A from Methylacidiphilum infernorum (isolate V4) (Methylokorus infernorum (strain V4)).